A 366-amino-acid polypeptide reads, in one-letter code: Chorismate synthase (366 aa).

NADP(+) contacts are provided by R48 and R54. Residues 125-127 (RSS), 238-239 (NA), G278, 293-297 (KPTSS), and R319 contribute to the FMN site.

Belongs to the chorismate synthase family. As to quaternary structure, homotetramer. FMNH2 serves as cofactor.

The catalysed reaction is 5-O-(1-carboxyvinyl)-3-phosphoshikimate = chorismate + phosphate. It functions in the pathway metabolic intermediate biosynthesis; chorismate biosynthesis; chorismate from D-erythrose 4-phosphate and phosphoenolpyruvate: step 7/7. Its function is as follows. Catalyzes the anti-1,4-elimination of the C-3 phosphate and the C-6 proR hydrogen from 5-enolpyruvylshikimate-3-phosphate (EPSP) to yield chorismate, which is the branch point compound that serves as the starting substrate for the three terminal pathways of aromatic amino acid biosynthesis. This reaction introduces a second double bond into the aromatic ring system. This Burkholderia multivorans (strain ATCC 17616 / 249) protein is Chorismate synthase.